The sequence spans 938 residues: Kexin (938 aa).

Positions 1 to 20 are cleaved as a signal peptide; sequence MLPIKLLIFILGYLLSPTLQ. N-linked (GlcNAc...) asparagine glycosylation is found at Asn-41 and Asn-193. One can recognise a Peptidase S8 domain in the interval 179–489; sequence QWHLINLKYP…YGKTDAYKMV (311 aa). Active-site charge relay system residues include Asp-213 and His-251. 2 cysteine pairs are disulfide-bonded: Cys-267/Cys-414 and Cys-359/Cys-389. Ser-422 functions as the Charge relay system in the catalytic mechanism. N-linked (GlcNAc...) asparagine glycans are attached at residues Asn-441, Asn-512, Asn-539, and Asn-599. Residues 498–647 form the P/Homo B domain; it reads VKPQAWYYSD…QFRIFGESID (150 aa). Residues 671-768 form a disordered region; it reads EKQNSKSTTT…DNDNDNGNKK (98 aa). Low complexity predominate over residues 677-691; it reads STTTTSSTTTATTTS. Over residues 711–735 the composition is skewed to polar residues; it reads KVDNSASITTSQTASLTSSNEQHQP. Acidic residues predominate over residues 740–762; that stretch reads SDSDSDTDDENKQEGEEDNDNDN. Residues 775–795 form a helical membrane-spanning segment; that stretch reads GFYLMSIAVVGFIAVLLVMKF. The Cytoplasmic segment spans residues 796 to 924; that stretch reads HKTPGSGRRR…SGTSTKKYKD (129 aa). Over residues 798 to 808 the composition is skewed to basic residues; that stretch reads TPGSGRRRRRR. Residues 798-938 are disordered; the sequence is TPGSGRRRRR…EDHKDVVGTQ (141 aa). Residues 820–831 are compositionally biased toward acidic residues; the sequence is DYSDSDDDEDDF. Over residues 832-849 the composition is skewed to basic and acidic residues; the sequence is DTRRADDDSFDLGHRNDQ. The span at 850-859 shows a compositional bias: low complexity; it reads RVVSASQQQR. Basic and acidic residues predominate over residues 860 to 874; that stretch reads QYDRQQDETRDRLFD. Over residues 902–919 the composition is skewed to polar residues; the sequence is QQSAKAPSNSEGNSGTST. Over residues 921–938 the composition is skewed to basic and acidic residues; it reads KYKDNEADEDHKDVVGTQ.

Belongs to the peptidase S8 family. Furin subfamily. Ca(2+) serves as cofactor. O-glycosylated.

The protein localises to the golgi apparatus. It is found in the trans-Golgi network membrane. The catalysed reaction is Cleavage of -Lys-Arg-|-Xaa- and -Arg-Arg-|-Xaa- bonds to process yeast alpha-factor pheromone and killer toxin precursors.. The chain is Kexin (KEX2) from Candida albicans (strain WO-1) (Yeast).